Here is a 313-residue protein sequence, read N- to C-terminus: UDP-glucose 4-epimerase (313 aa).

NAD(+)-binding positions include 11–12 (FI), 31–36 (DDLSSG), 56–57 (DI), and 77–81 (LAAQI). Positions 121 and 146 each coordinate substrate. Residues tyrosine 146 and lysine 150 each contribute to the NAD(+) site. Tyrosine 146 functions as the Proton acceptor in the catalytic mechanism. Residues asparagine 175, 189–190 (VV), 204–206 (KIF), arginine 213, and 271–274 (RLGD) each bind substrate.

This sequence belongs to the NAD(P)-dependent epimerase/dehydratase family. As to quaternary structure, homodimer. NAD(+) is required as a cofactor.

It catalyses the reaction UDP-alpha-D-glucose = UDP-alpha-D-galactose. It functions in the pathway carbohydrate metabolism; galactose metabolism. Involved in the metabolism of galactose. Catalyzes the conversion of UDP-galactose (UDP-Gal) to UDP-glucose (UDP-Glc) through a mechanism involving the transient reduction of NAD. This chain is UDP-glucose 4-epimerase, found in Mycolicibacterium smegmatis (strain ATCC 700084 / mc(2)155) (Mycobacterium smegmatis).